A 283-amino-acid chain; its full sequence is 2-heptyl-4(1H)-quinolone synthase subunit PqsB (283 aa).

The protein belongs to the thiolase-like superfamily. FabH family. In terms of assembly, forms a tight complex with PqsC.

It localises to the cytoplasm. Activity of the complex is inhibited by 2-aminoacetophenone (2-AA). Required for the biosynthesis of the quorum-sensing signaling molecules 2-heptyl-4(1H)-quinolone (HHQ) and 2-heptyl-3-hydroxy-4(1H)-quinolone (Pseudomonas quinolone signal or PQS), which are important for biofilm formation and virulence. The PqsC/PqsB complex catalyzes the condensation of 2-aminobenzoylacetate (2-ABA) and octanoyl-CoA to form HHQ. PqsB, together with PqsC, catalyzes the coupling of 2-ABA with the octanoate group, leading to decarboxylation and dehydration, and resulting in closure of the quinoline ring. PqsB is probably required for the proper folding of PqsC rather than for a direct enzymatic role in the process. The polypeptide is 2-heptyl-4(1H)-quinolone synthase subunit PqsB (Pseudomonas aeruginosa (strain ATCC 15692 / DSM 22644 / CIP 104116 / JCM 14847 / LMG 12228 / 1C / PRS 101 / PAO1)).